The chain runs to 456 residues: RuvB-like 1 (456 aa).

Residue Lys2 forms a Glycyl lysine isopeptide (Lys-Gly) (interchain with G-Cter in SUMO2) linkage. Residue 70–77 (GPPGTGKT) participates in ATP binding. Lys225 participates in a covalent cross-link: Glycyl lysine isopeptide (Lys-Gly) (interchain with G-Cter in SUMO1); alternate. Residue Lys225 forms a Glycyl lysine isopeptide (Lys-Gly) (interchain with G-Cter in SUMO2); alternate linkage. Residue Lys445 forms a Glycyl lysine isopeptide (Lys-Gly) (interchain with G-Cter in SUMO2) linkage. An N6-acetyllysine modification is found at Lys453.

Belongs to the RuvB family. Forms homohexameric rings. Can form a dodecamer with RUVBL2 made of two stacked hexameric rings; however, even though RUVBL1 and RUVBL2 are present in equimolar ratio, the oligomeric status of each hexamer is not known. Oligomerization may regulate binding to nucleic acids and conversely, binding to nucleic acids may affect the dodecameric assembly. Interaction of the complex with DHX34 results in conformational changes of the N-terminus of the RUVBL2 subunits, resulting in loss of nucleotide binding ability and ATP hydrolysis of the complex. Interacts with the transcriptional activation domain of MYC. Component of the RNA polymerase II holoenzyme complex. May also act to bridge the LEF1/TCF1-CTNNB1 complex and TBP. Component of the NuA4 histone acetyltransferase complex which contains the catalytic subunit KAT5/TIP60 and the subunits EP400, TRRAP/PAF400, BRD8/SMAP, EPC1, DMAP1/DNMAP1, RUVBL1/TIP49, RUVBL2, ING3, actin, ACTL6A/BAF53A, MORF4L1/MRG15, MORF4L2/MRGX, MRGBP, YEATS4/GAS41, VPS72/YL1 and MEAF6. The NuA4 complex interacts with MYC and the adenovirus E1A protein. RUVBL1 interacts with EP400. Component of a NuA4-related complex which contains EP400, TRRAP/PAF400, SRCAP, BRD8/SMAP, EPC1, DMAP1/DNMAP1, RUVBL1/TIP49, RUVBL2, actin, ACTL6A/BAF53A, VPS72 and YEATS4/GAS41. Component of the BAF53 complex, at least composed of ACTL6A/BAF53A, RUVBL1/TIP49, SMARCA2/BRM, and TRRAP/PAF400. Component of some MLL1/MLL complex, at least composed of the core components KMT2A/MLL1, ASH2L, HCFC1/HCF1, WDR5 and RBBP5, as well as the facultative components BACC1, CHD8, E2F6, HSP70, INO80C, KANSL1, LAS1L, MAX, MCRS1, MGA, MYST1/MOF, PELP1, PHF20, PRP31, RING2, RUVB1/TIP49A, RUVB2/TIP49B, SENP3, TAF1, TAF4, TAF6, TAF7, TAF9 and TEX10. Associates with alpha and gamma tubulins, particularly during metaphase and early anaphase. Interacts with NPAT. Component of the chromatin-remodeling INO80 complex; specifically part of a complex module associated with the helicase ATP-binding and the helicase C-terminal domain of INO80. Interacts with IGHMBP2. Interacts with OFD1. Interacts with HINT1. Component of a complex with USP49 and PSMC5. Component of a SWR1-like complex. Component of the R2TP complex composed at least of RUVBL1, RUVBL2, RPAP3 and PIHD1. Component of the PAQosome complex which is responsible for the biogenesis of several protein complexes and which consists of R2TP complex members RUVBL1, RUVBL2, RPAP3 and PIH1D1, URI complex members PFDN2, PFDN6, PDRG1, UXT and URI1 as well as ASDURF, POLR2E and DNAAF10/WDR92. Interacts with PIH1D1. Interacts with ITFG1. Interacts with WAC; WAC positively regulates MTOR activity by promoting the assembly of the TTT complex composed of TELO2, TTI1 and TTI2 and the RUVBL complex composed of RUVBL1 and RUVBL2 into the TTT-RUVBL complex which leads to the dimerization of the mTORC1 complex and its subsequent activation. The RUVBL1/RUVBL2 complex interacts with ZNHIT1 (via HIT-type zinc finger), ZNHIT3 (via HIT-type zinc finger), ZNHIT6 (via HIT-type zinc finger) and DDX59/ZNHIT5 (via HIT-type zinc finger) in the presence of ADP. Interacts with NOPCHAP1; the interaction is direct and disrupted upon ATP binding. Interacts with SMG1. Interacts with NOP2, NOP56 and NUFIP1. In terms of assembly, (Microbial infection) Interacts with Mumps L polymerase; this interaction regulates the viral transcription. In terms of tissue distribution, ubiquitously expressed with high expression in heart, skeletal muscle and testis.

The protein localises to the nucleus matrix. It is found in the nucleus. Its subcellular location is the nucleoplasm. It localises to the cytoplasm. The protein resides in the membrane. The protein localises to the cytoskeleton. It is found in the microtubule organizing center. Its subcellular location is the centrosome. It localises to the dynein axonemal particle. The catalysed reaction is ATP + H2O = ADP + phosphate + H(+). Possesses single-stranded DNA-stimulated ATPase and ATP-dependent DNA helicase (3' to 5') activity; hexamerization is thought to be critical for ATP hydrolysis and adjacent subunits in the ring-like structure contribute to the ATPase activity. Component of the NuA4 histone acetyltransferase complex which is involved in transcriptional activation of select genes principally by acetylation of nucleosomal histones H4 and H2A. This modification may both alter nucleosome-DNA interactions and promote interaction of the modified histones with other proteins which positively regulate transcription. This complex may be required for the activation of transcriptional programs associated with oncogene and proto-oncogene mediated growth induction, tumor suppressor mediated growth arrest and replicative senescence, apoptosis, and DNA repair. The NuA4 complex ATPase and helicase activities seem to be, at least in part, contributed by the association of RUVBL1 and RUVBL2 with EP400. NuA4 may also play a direct role in DNA repair when recruited to sites of DNA damage. Component of a SWR1-like complex that specifically mediates the removal of histone H2A.Z/H2AZ1 from the nucleosome. Proposed core component of the chromatin remodeling INO80 complex which exhibits DNA- and nucleosome-activated ATPase activity and catalyzes ATP-dependent nucleosome sliding. Plays an essential role in oncogenic transformation by MYC and also modulates transcriptional activation by the LEF1/TCF1-CTNNB1 complex. Essential for cell proliferation. May be able to bind plasminogen at cell surface and enhance plasminogen activation. The polypeptide is RuvB-like 1 (Homo sapiens (Human)).